We begin with the raw amino-acid sequence, 296 residues long: Guided entry of tail-anchored proteins factor CAMLG (296 aa).

The interval 1–79 (MESMAVATDG…SDKLNSLSVP (79 aa)) is disordered. The Cytoplasmic portion of the chain corresponds to 1 to 189 (MESMAVATDG…NTTEEFDSFR (189 aa)). Ser55 is modified (phosphoserine). Residues 61 to 72 (SQTKSKQQDSDK) show a composition bias toward basic and acidic residues. The helical transmembrane segment at 190 to 207 (IFRLVGCALLALGVRAFV) threads the bilayer. Residues 208 to 212 (CKYLS) are Lumenal-facing. Cysteines 208 and 284 form a disulfide. Residues 213 to 231 (IFAPFLTLQLAYMGLYKYF) form a helical membrane-spanning segment. Residues 232 to 269 (PKSEKKIKTTVLTAALLLSGIPAEVINRSMDTYSKMGE) lie on the Cytoplasmic side of the membrane. Residues 270–288 (VFTDLCVYFFTFIFCHELL) traverse the membrane as a helical segment. Topologically, residues 289 to 296 (DYWGSEVP) are lumenal.

Component of the Golgi to ER traffic (GET) complex, which is composed of GET1/WRB, CAMLG/GET2 and GET3/TRC40. Within the complex, GET1 and CAMLG form a heterotetramer which is stabilized by phosphatidylinositol binding and which binds to the GET3 homodimer. Interacts (via C-terminus) with GET1. Interacts (via N-terminus) with GET3. GET3 shows a higher affinity for CAMLG than for GET1. Interacts (via N-terminus) with TNFRSF13B/TACI (via C-terminus). As to quaternary structure, (Microbial infection) Interacts with human herpes virus 8/HHV-8 protein K7; this interaction modulates intracellular calcium concentration. In terms of tissue distribution, ubiquitous. Highest levels in brain, testis and ovary.

Its subcellular location is the endoplasmic reticulum membrane. Functionally, required for the post-translational delivery of tail-anchored (TA) proteins to the endoplasmic reticulum. Together with GET1/WRB, acts as a membrane receptor for soluble GET3/TRC40, which recognizes and selectively binds the transmembrane domain of TA proteins in the cytosol. Required for the stability of GET1. Stimulates calcium signaling in T cells through its involvement in elevation of intracellular calcium. Essential for the survival of peripheral follicular B cells. This is Guided entry of tail-anchored proteins factor CAMLG from Homo sapiens (Human).